The chain runs to 267 residues: 4-hydroxy-tetrahydrodipicolinate reductase (267 aa).

NAD(+) contacts are provided by residues 9–14 and aspartate 35; that span reads GAAGRM. Arginine 36 is a binding site for NADP(+). Residues 99-101 and 123-126 each bind NAD(+); these read GTT and APNY. The Proton donor/acceptor role is filled by histidine 156. A (S)-2,3,4,5-tetrahydrodipicolinate-binding site is contributed by histidine 157. Residue lysine 160 is the Proton donor of the active site. 166–167 contributes to the (S)-2,3,4,5-tetrahydrodipicolinate binding site; it reads GT.

Belongs to the DapB family.

It is found in the cytoplasm. It catalyses the reaction (S)-2,3,4,5-tetrahydrodipicolinate + NAD(+) + H2O = (2S,4S)-4-hydroxy-2,3,4,5-tetrahydrodipicolinate + NADH + H(+). It carries out the reaction (S)-2,3,4,5-tetrahydrodipicolinate + NADP(+) + H2O = (2S,4S)-4-hydroxy-2,3,4,5-tetrahydrodipicolinate + NADPH + H(+). It functions in the pathway amino-acid biosynthesis; L-lysine biosynthesis via DAP pathway; (S)-tetrahydrodipicolinate from L-aspartate: step 4/4. In terms of biological role, catalyzes the conversion of 4-hydroxy-tetrahydrodipicolinate (HTPA) to tetrahydrodipicolinate. The protein is 4-hydroxy-tetrahydrodipicolinate reductase of Alkalilimnicola ehrlichii (strain ATCC BAA-1101 / DSM 17681 / MLHE-1).